Reading from the N-terminus, the 416-residue chain is Serine hydroxymethyltransferase (416 aa).

(6S)-5,6,7,8-tetrahydrofolate-binding positions include L121 and 125 to 127 (GHL). K229 is modified (N6-(pyridoxal phosphate)lysine). (6S)-5,6,7,8-tetrahydrofolate-binding positions include E245 and 354-356 (SPF).

Belongs to the SHMT family. In terms of assembly, homodimer. Requires pyridoxal 5'-phosphate as cofactor.

The protein resides in the cytoplasm. The enzyme catalyses (6R)-5,10-methylene-5,6,7,8-tetrahydrofolate + glycine + H2O = (6S)-5,6,7,8-tetrahydrofolate + L-serine. It functions in the pathway one-carbon metabolism; tetrahydrofolate interconversion. The protein operates within amino-acid biosynthesis; glycine biosynthesis; glycine from L-serine: step 1/1. Functionally, catalyzes the reversible interconversion of serine and glycine with tetrahydrofolate (THF) serving as the one-carbon carrier. This reaction serves as the major source of one-carbon groups required for the biosynthesis of purines, thymidylate, methionine, and other important biomolecules. Also exhibits THF-independent aldolase activity toward beta-hydroxyamino acids, producing glycine and aldehydes, via a retro-aldol mechanism. The protein is Serine hydroxymethyltransferase of Aliivibrio fischeri (strain ATCC 700601 / ES114) (Vibrio fischeri).